The following is a 126-amino-acid chain: Glycine cleavage system H protein (126 aa).

Residues 22-104 (TVTIGITEYA…YEKAWMVKVE (83 aa)) enclose the Lipoyl-binding domain. Lys-63 carries the N6-lipoyllysine modification.

It belongs to the GcvH family. The glycine cleavage system is composed of four proteins: P, T, L and H. It depends on (R)-lipoate as a cofactor.

Its function is as follows. The glycine cleavage system catalyzes the degradation of glycine. The H protein shuttles the methylamine group of glycine from the P protein to the T protein. Is also involved in protein lipoylation via its role as an octanoyl/lipoyl carrier protein intermediate. This is Glycine cleavage system H protein from Staphylococcus haemolyticus (strain JCSC1435).